Consider the following 238-residue polypeptide: Group 3 late-embryogenesis abundant protein, mitochondrial (238 aa).

Residues 41-62 (SSGSGRPADNWAESQKEKAKAG) are disordered. Positions 50–202 (NWAESQKEKA…AGDLKDKAQQ (153 aa)) form a coiled coil. LEA 11-mer repeat repeat units follow at residues 64-74 (KDAQAEVGKVA), 89-99 (KDAVKQGANDL), 140-150 (KEAAENAWEKT), 151-161 (KDVAENLKDKV), 179-189 (KDRAQDAASEV), and 190-200 (KHKAGDLKDKA). Composition is skewed to basic and acidic residues over residues 182–200 (AQDAASEVKHKAGDLKDKA) and 213–225 (DNRKQDQQQRRDS). A disordered region spans residues 182 to 238 (AQDAASEVKHKAGDLKDKAQQVIHDATTQSGDNRKQDQQQRRDSQGSQSGQNSRSRN). The segment covering 226–238 (QGSQSGQNSRSRN) has biased composition (low complexity).

It belongs to the LEA type 4 family.

The protein localises to the mitochondrion. Mitochondrial heat soluble protein acting as a molecular shield in water-deficient condition. This Hypsibius exemplaris (Freshwater tardigrade) protein is Group 3 late-embryogenesis abundant protein, mitochondrial.